Reading from the N-terminus, the 197-residue chain is Putative manganese efflux pump MntP 1 (197 aa).

6 helical membrane passes run 8–28, 43–63, 66–86, 123–143, 146–166, and 176–196; these read VILLAIALAMDAFAVSIGLGA, VYAALYFGIAQGVMPLIGYLL, VLLGWLATAAPWLGGGILILL, LAIATSIDAMAAGFTLNLLAL, WLACSIIAIVTAGFGFFGIYL, and DKAEILGGLVLIAIGIKVMFI.

Belongs to the MntP (TC 9.B.29) family.

The protein resides in the cell inner membrane. Probably functions as a manganese efflux pump. The chain is Putative manganese efflux pump MntP 1 from Psychrobacter cryohalolentis (strain ATCC BAA-1226 / DSM 17306 / VKM B-2378 / K5).